Consider the following 298-residue polypeptide: Olfactory receptor 52Z1P (298 aa).

The Extracellular segment spans residues 1-14 (MGIPGLEGLHTWIS). A helical transmembrane segment spans residues 15–35 (IPFSFMYIVAVAGNIFLIFLI). Over 36 to 43 (MTERSLHE) the chain is Cytoplasmic. A helical transmembrane segment spans residues 44-64 (PMYLFLSMLASADFLLATAAA). The Extracellular portion of the chain corresponds to 65-85 (PKVLAILWFHSMDISFGSCVS). Cys-83 and Cys-164 are joined by a disulfide. A helical membrane pass occupies residues 86–106 (QMFFIHFIFVAESAILLAMAF). Residues 107–128 (DRYVAICYPLRYTILTSSAVRK) lie on the Cytoplasmic side of the membrane. The helical transmembrane segment at 129 to 149 (IGIAAVVRSFFICCPFIFLVY) threads the bilayer. Over 150–178 (RLTYCGRNIIPHSYCEHIARLACGNINVN) the chain is Extracellular. A helical transmembrane segment spans residues 179–199 (IIYGLTVALLSTGLDIVLIII). Residues 200–223 (SYTMILHSVFQISSWAARFKALST) are Cytoplasmic-facing. A helical transmembrane segment spans residues 224-244 (CGSHICVIFMFYTPAFFSFLA). Topologically, residues 245 to 257 (HRFGGKTIPHHIH) are extracellular. Residues 258–278 (ILVGSLYVLVPPMLNPIIYGV) form a helical membrane-spanning segment. Topologically, residues 279–298 (KTKQIKDRVILLFSPISVCC) are cytoplasmic.

This sequence belongs to the G-protein coupled receptor 1 family.

Its subcellular location is the cell membrane. Functionally, odorant receptor. The sequence is that of Olfactory receptor 52Z1P from Homo sapiens (Human).